The sequence spans 1706 residues: 5'-3' exoribonuclease 1 (1706 aa).

Ser-1348 bears the Phosphoserine mark. Positions 1619-1706 (ENKEAQSSQA…VNFGVSKPSE (88 aa)) are disordered. Over residues 1623 to 1642 (AQSSQATPVQTSQPDSSNIV) the composition is skewed to polar residues. Ser-1645 bears the Phosphoserine mark. The segment covering 1647-1657 (RESSSASLKSS) has biased composition (low complexity). Over residues 1658 to 1676 (PIAQPASSFQVETASQGHS) the composition is skewed to polar residues. The span at 1677–1694 (ISHHKSTPISSSRRKSRK) shows a compositional bias: basic residues.

It belongs to the 5'-3' exonuclease family. As to quaternary structure, found in a mRNP complex with UPF1, UPF2, UPF3B and XRN1. Associates with alpha and beta tubulins. Interacts with DIS3L2. Interacts with ZC3HAV1 in an RNA-dependent manner. Interacts with ZFP36L1. Interacts with TRIM71 (via NHL repeats) in an RNA-dependent manner. Interacts with YTHDC2 (via ANK repeats). Interacts with DHX34; the interaction is RNA-independent. As to expression, expressed in heart, brain, pancreas, spleen, testis, osteogenic sarcoma (OGS) biopsy and primary cell lines.

It is found in the cytoplasm. Its function is as follows. Major 5'-3' exoribonuclease involved in mRNA decay. Required for the 5'-3'-processing of the G4 tetraplex-containing DNA and RNA substrates. The kinetic of hydrolysis is faster for G4 RNA tetraplex than for G4 DNA tetraplex and monomeric RNA tetraplex. Binds to RNA and DNA. Plays a role in replication-dependent histone mRNA degradation. May act as a tumor suppressor protein in osteogenic sarcoma (OGS). The polypeptide is 5'-3' exoribonuclease 1 (Homo sapiens (Human)).